Consider the following 529-residue polypeptide: UPF0159 protein TC_0921 (529 aa).

ThyX domains follow at residues 38-274 and 309-511; these read KGAL…AEPH and KGVK…LKFV.

It belongs to the UPF0159 family.

The sequence is that of UPF0159 protein TC_0921 from Chlamydia muridarum (strain MoPn / Nigg).